Consider the following 208-residue polypeptide: Small ribosomal subunit protein uS4 (208 aa).

The 64-residue stretch at 98-161 (QRLDNVVYRM…KTNSQILRAI (64 aa)) folds into the S4 RNA-binding domain.

Belongs to the universal ribosomal protein uS4 family. As to quaternary structure, part of the 30S ribosomal subunit. Contacts protein S5. The interaction surface between S4 and S5 is involved in control of translational fidelity.

Functionally, one of the primary rRNA binding proteins, it binds directly to 16S rRNA where it nucleates assembly of the body of the 30S subunit. In terms of biological role, with S5 and S12 plays an important role in translational accuracy. This chain is Small ribosomal subunit protein uS4, found in Sulfurovum sp. (strain NBC37-1).